Reading from the N-terminus, the 310-residue chain is tRNA pseudouridine synthase B (310 aa).

Residue Asp49 is the Nucleophile of the active site.

Belongs to the pseudouridine synthase TruB family. Type 1 subfamily.

It catalyses the reaction uridine(55) in tRNA = pseudouridine(55) in tRNA. In terms of biological role, responsible for synthesis of pseudouridine from uracil-55 in the psi GC loop of transfer RNAs. This chain is tRNA pseudouridine synthase B, found in Sinorhizobium medicae (strain WSM419) (Ensifer medicae).